The following is a 268-amino-acid chain: Cell division cycle-associated protein 3 (268 aa).

2 disordered regions span residues 1 to 232 and 247 to 268; these read MGSA…SELK and GRAW…LVES. Serine 29 and serine 31 each carry phosphoserine. Threonine 37 is modified (phosphothreonine). Phosphoserine occurs at positions 44, 64, and 68. Residues 56–66 are compositionally biased toward basic and acidic residues; it reads EGLKHAQDSDP. Threonine 76 bears the Phosphothreonine mark. Phosphoserine occurs at positions 87 and 94. The tract at residues 91-120 is F-box-like; sequence KQLSEVFETEDSKSNLPPEPVLPPEAPLSS. Pro residues predominate over residues 107–116; that stretch reads PPEPVLPPEA. Over residues 117–126 the composition is skewed to low complexity; it reads PLSSELDLPL. Polar residues-rich tracts occupy residues 128 to 149, 158 to 169, and 178 to 194; these read TQLS…SKQV, PTETPVASQSSD, and PRSS…NSSK. Phosphoserine is present on serine 199. A Phosphothreonine modification is found at threonine 202. A compositionally biased stretch (polar residues) spans 205–215; sequence QDDNSPGTLTL. Serine 209 carries the post-translational modification Phosphoserine. Residue threonine 212 is modified to Phosphothreonine. The KEN box signature appears at 258–260; the sequence is KEN.

Interacts with SKP1. Part of a SCF (SKP1-cullin-F-box) protein ligase complex. In terms of processing, ubiquitinated and degraded by the APC/C-Cdh1 complex.

It localises to the cytoplasm. Its subcellular location is the cytosol. It participates in protein modification; protein ubiquitination. Functionally, F-box-like protein which is required for entry into mitosis. Acts by participating in E3 ligase complexes that mediate the ubiquitination and degradation of WEE1 kinase at G2/M phase. This is Cell division cycle-associated protein 3 (CDCA3) from Homo sapiens (Human).